The sequence spans 401 residues: ATP phosphoribosyltransferase regulatory subunit (401 aa).

It belongs to the class-II aminoacyl-tRNA synthetase family. HisZ subfamily. In terms of assembly, heteromultimer composed of HisG and HisZ subunits.

The protein localises to the cytoplasm. It functions in the pathway amino-acid biosynthesis; L-histidine biosynthesis; L-histidine from 5-phospho-alpha-D-ribose 1-diphosphate: step 1/9. Functionally, required for the first step of histidine biosynthesis. May allow the feedback regulation of ATP phosphoribosyltransferase activity by histidine. This chain is ATP phosphoribosyltransferase regulatory subunit, found in Cyanothece sp. (strain PCC 7425 / ATCC 29141).